Here is a 118-residue protein sequence, read N- to C-terminus: Large ribosomal subunit protein bL19 (118 aa).

This sequence belongs to the bacterial ribosomal protein bL19 family.

In terms of biological role, this protein is located at the 30S-50S ribosomal subunit interface and may play a role in the structure and function of the aminoacyl-tRNA binding site. In Geobacter sulfurreducens (strain ATCC 51573 / DSM 12127 / PCA), this protein is Large ribosomal subunit protein bL19.